The primary structure comprises 611 residues: Protein spaetzle 3 (611 aa).

Positions 1-14 are cleaved as a signal peptide; it reads MALTNFSLPFGALG. Asn5 carries an N-linked (GlcNAc...) asparagine glycan. Residues 57–322 form a disordered region; the sequence is EYFKNNPYAP…NDKSNNNQMP (266 aa). 3 stretches are compositionally biased toward low complexity: residues 104–120, 127–153, and 169–185; these read QQVQ…QHQQ, SVSF…LTQT, and PGQQ…QQKQ. Residues 191-210 are compositionally biased toward polar residues; it reads GSASATFTKNSGSFSITSFG. Residues 218–239 show a composition bias toward pro residues; that stretch reads PPQPQQPPPSQQQQPPPAPPPQ. The segment covering 288–306 has biased composition (acidic residues); the sequence is YDVEEGEEDEEEDGEEEGQ. Asn335 and Asn351 each carry an N-linked (GlcNAc...) asparagine glycan. The disordered stretch occupies residues 477–518; the sequence is KKRQAAAGGSRNRGGSAGGSGNGNTNANRQPGNKNGSSGTGR. Residues 487–498 show a composition bias toward gly residues; sequence RNRGGSAGGSGN. The N-linked (GlcNAc...) asparagine glycan is linked to Asn511. In terms of domain architecture, Spaetzle spans 521–609; that stretch reads ACESKIEIVT…LFPSCCVCRC (89 aa). Intrachain disulfides connect Cys522/Cys573, Cys559/Cys605, and Cys567/Cys607.

As to quaternary structure, homodimer; disulfide-linked.

Functionally, neurotrophin which may function as a ligand to the Toll-related receptor Tollo. Involved in a Tollo and JNK signaling pathway that positively regulates neuromuscular junction (NMJ) growth in presynaptic motorneurons. May function by activating Tollo to promote the phosphorylation of JNK. The protein is Protein spaetzle 3 of Drosophila melanogaster (Fruit fly).